The chain runs to 87 residues: Translation initiation factor IF-1 2 (87 aa).

The S1-like domain maps to 1–72; it reads MAADDHIEME…TKGRIARRTT (72 aa). The tract at residues 65–87 is disordered; sequence GRIARRTTTPSGGPRPARSGNRR.

It belongs to the IF-1 family. In terms of assembly, component of the 30S ribosomal translation pre-initiation complex which assembles on the 30S ribosome in the order IF-2 and IF-3, IF-1 and N-formylmethionyl-tRNA(fMet); mRNA recruitment can occur at any time during PIC assembly.

Its subcellular location is the cytoplasm. One of the essential components for the initiation of protein synthesis. Stabilizes the binding of IF-2 and IF-3 on the 30S subunit to which N-formylmethionyl-tRNA(fMet) subsequently binds. Helps modulate mRNA selection, yielding the 30S pre-initiation complex (PIC). Upon addition of the 50S ribosomal subunit IF-1, IF-2 and IF-3 are released leaving the mature 70S translation initiation complex. This is Translation initiation factor IF-1 2 from Nitratidesulfovibrio vulgaris (strain ATCC 29579 / DSM 644 / CCUG 34227 / NCIMB 8303 / VKM B-1760 / Hildenborough) (Desulfovibrio vulgaris).